A 278-amino-acid polypeptide reads, in one-letter code: Cysteine-rich repeat secretory protein 18 (278 aa).

The signal sequence occupies residues 1–32; it reads MYSSSSVSKRFVLVPIVVVVTTQLLLVRNVSS. Gnk2-homologous domains follow at residues 39 to 147 and 160 to 267; these read YLHH…SLDT and PSAK…LYPF.

This sequence belongs to the cysteine-rich repeat secretory protein family.

Its subcellular location is the secreted. This chain is Cysteine-rich repeat secretory protein 18 (CRRSP18), found in Arabidopsis thaliana (Mouse-ear cress).